The primary structure comprises 497 residues: Zinc metalloproteinase nas-28 (497 aa).

The first 14 residues, 1-14 (MFFPVVFFIPFVLG), serve as a signal peptide directing secretion. A propeptide spanning residues 15–120 (APTQKALEKI…IENGNYRSKR (106 aa)) is cleaved from the precursor. N76 is a glycosylation site (N-linked (GlcNAc...) asparagine). The 199-residue stretch at 121-319 (QAIVDTTNFW…IGVNKLYNCT (199 aa)) folds into the Peptidase M12A domain. 7 disulfides stabilise this stretch: C164–C318, C185–C206, C328–C339, C331–C342, C344–C353, C364–C398, and C427–C447. Residue H214 participates in Zn(2+) binding. E215 is an active-site residue. Positions 218 and 224 each coordinate Zn(2+). An N-linked (GlcNAc...) asparagine glycan is attached at N317. Positions 324–354 (IQMKCSNCGITDSRNCNQCKCPRYFTGASCD) constitute an EGF-like domain. The CUB domain occupies 364-483 (CNGAVLQATS…LTFSIQYRAV (120 aa)). N394 is a glycosylation site (N-linked (GlcNAc...) asparagine).

The cofactor is Zn(2+).

It localises to the secreted. Metalloprotease. This chain is Zinc metalloproteinase nas-28 (nas-28), found in Caenorhabditis elegans.